The following is a 91-amino-acid chain: Sec-independent protein translocase protein TatA (91 aa).

Residues 1 to 21 (MGIFDWKHWIVILIVVVLVFG) traverse the membrane as a helical segment. The segment at 41–91 (KAMNDDDKPAEQPAPQPQQAQPAPQGSPLNQPHTIDAQAHKVDEPIRKDQV) is disordered. Over residues 51 to 64 (EQPAPQPQQAQPAP) the composition is skewed to low complexity. Over residues 78-91 (QAHKVDEPIRKDQV) the composition is skewed to basic and acidic residues.

This sequence belongs to the TatA/E family. In terms of assembly, the Tat system comprises two distinct complexes: a TatABC complex, containing multiple copies of TatA, TatB and TatC subunits, and a separate TatA complex, containing only TatA subunits. Substrates initially bind to the TatABC complex, which probably triggers association of the separate TatA complex to form the active translocon.

Its subcellular location is the cell inner membrane. Its function is as follows. Part of the twin-arginine translocation (Tat) system that transports large folded proteins containing a characteristic twin-arginine motif in their signal peptide across membranes. TatA could form the protein-conducting channel of the Tat system. The protein is Sec-independent protein translocase protein TatA of Pseudomonas syringae pv. syringae (strain B728a).